We begin with the raw amino-acid sequence, 295 residues long: Tyrosine recombinase XerC (295 aa).

Residues 1–85 (MLTALNRYWD…ALRRFLSFLV (85 aa)) form the Core-binding (CB) domain. The Tyr recombinase domain maps to 106–285 (HLPKNMDGEQ…NFQHLAEVYD (180 aa)). Active-site residues include Arg-145, Lys-169, His-237, Arg-240, and His-263. Tyr-272 serves as the catalytic O-(3'-phospho-DNA)-tyrosine intermediate.

This sequence belongs to the 'phage' integrase family. XerC subfamily. As to quaternary structure, forms a cyclic heterotetrameric complex composed of two molecules of XerC and two molecules of XerD.

Its subcellular location is the cytoplasm. Functionally, site-specific tyrosine recombinase, which acts by catalyzing the cutting and rejoining of the recombining DNA molecules. The XerC-XerD complex is essential to convert dimers of the bacterial chromosome into monomers to permit their segregation at cell division. It also contributes to the segregational stability of plasmids. The polypeptide is Tyrosine recombinase XerC (Haemophilus influenzae (strain PittEE)).